The following is a 248-amino-acid chain: Type III pantothenate kinase (248 aa).

6–13 (DIGNTETK) is a binding site for ATP. 103–106 (GSDR) lines the substrate pocket. Catalysis depends on Asp105, which acts as the Proton acceptor. Asp124 is a binding site for K(+). An ATP-binding site is contributed by Thr127. A substrate-binding site is contributed by Thr178.

Belongs to the type III pantothenate kinase family. In terms of assembly, homodimer. It depends on NH4(+) as a cofactor. K(+) serves as cofactor.

It is found in the cytoplasm. It carries out the reaction (R)-pantothenate + ATP = (R)-4'-phosphopantothenate + ADP + H(+). Its pathway is cofactor biosynthesis; coenzyme A biosynthesis; CoA from (R)-pantothenate: step 1/5. Catalyzes the phosphorylation of pantothenate (Pan), the first step in CoA biosynthesis. This Pelagibacter ubique (strain HTCC1062) protein is Type III pantothenate kinase.